We begin with the raw amino-acid sequence, 128 residues long: Large-conductance mechanosensitive channel (128 aa).

Residues 1–16 (MNFIKEFREFAMRGNV) are Cytoplasmic-facing. Residues 17 to 45 (VDMAVGVIIGSAFGKIVSSLVSDIFTPVL) form a helical membrane-spanning segment. The Periplasmic segment spans residues 46 to 74 (GILTGGIDFKDMKFVLAQAQGDVPAVTLN). A helical transmembrane segment spans residues 75 to 94 (YGLFIQNVIDFIIIAFAIFM). The Cytoplasmic portion of the chain corresponds to 95-128 (MIKVINKVRKPEEKKTAPKAETLLTEIRDLLKNK).

Belongs to the MscL family. As to quaternary structure, homopentamer.

Its subcellular location is the cell inner membrane. Functionally, channel that opens in response to stretch forces in the membrane lipid bilayer. Forms a nonselective ion channel with a conductance of about 4 nanosiemens. May participate in the regulation of osmotic pressure changes within the cell. The polypeptide is Large-conductance mechanosensitive channel (Haemophilus influenzae (strain ATCC 51907 / DSM 11121 / KW20 / Rd)).